We begin with the raw amino-acid sequence, 750 residues long: Ribosomal RNA large subunit methyltransferase K/L (750 aa).

The region spanning 46-157 (TAYRLCLWSR…RGEAILSLDL (112 aa)) is the THUMP domain.

The protein belongs to the methyltransferase superfamily. RlmKL family.

The protein localises to the cytoplasm. The enzyme catalyses guanosine(2445) in 23S rRNA + S-adenosyl-L-methionine = N(2)-methylguanosine(2445) in 23S rRNA + S-adenosyl-L-homocysteine + H(+). It carries out the reaction guanosine(2069) in 23S rRNA + S-adenosyl-L-methionine = N(2)-methylguanosine(2069) in 23S rRNA + S-adenosyl-L-homocysteine + H(+). Specifically methylates the guanine in position 2445 (m2G2445) and the guanine in position 2069 (m7G2069) of 23S rRNA. The protein is Ribosomal RNA large subunit methyltransferase K/L of Pseudomonas syringae pv. tomato (strain ATCC BAA-871 / DC3000).